Here is a 652-residue protein sequence, read N- to C-terminus: Apicoplast pyruvate carrier 2 (652 aa).

The Cytoplasmic portion of the chain corresponds to 1–45 (MSAFPASPQPSAFPASPQPSAFPASPQPSASPVSPRHCVSPSSGT). Positions 1–53 (MSAFPASPQPSAFPASPQPSAFPASPQPSASPVSPRHCVSPSSGTLPSSSSPS) are disordered. 12 helical membrane-spanning segments follow: residues 46-66 (LPSSSSPSVSSCALRGLSSSS), 126-146 (NLLPYLIGFIRNAQATSAVSY), 167-187 (GTTLEKKAGTKKTAFLGSAWM), 189-209 (LGLALCGVCTHDLSLFLIAYG), 212-232 (TALGCGVAYPVPLAATLKLSP), 278-298 (LPYLSSVASDTASASRLSSLN), 345-365 (LVDPERTSAADEAAADAAERQ), 385-405 (SCSASQVFASLVLTPQDICSS), 417-437 (LSWQSLFFVQLFWKVLPLYPE), 445-465 (AAPAPLDSLFASVVRRVPRAL), 467-487 (SASRPDPRALHAAADAWSLTG), and 515-535 (LWGYIGGGIGYMRSTVVMNAL). The Cytoplasmic segment spans residues 536-652 (TAPCLFALST…LPYRFPTYSP (117 aa)).

Belongs to the major facilitator superfamily. Interacts with apicoplast pyruvate carrier 1.

Its subcellular location is the plastid. It localises to the apicoplast. It is found in the membrane. Along with apicoplast pyruvate carrier 1, forms apicoplast pyruvate carrier (APC) complex, which transports pyruvate into the apicoplast and may also transport amino acids like methionine, serine, glycine and tryptophan with low efficiency. Required for maintaining pyruvate-dependent metabolic activities in the apicoplast, such as synthesis of fatty acids, isopentenyl pyrophosphate (IPP), dimethylallyl pyrophosphate (DMAPP) and methylerythritol 4-phosphate (MEP). Required for maintaining the integrity of the apicoplast. Required for normal parasite growth. This Toxoplasma gondii protein is Apicoplast pyruvate carrier 2.